The following is a 558-amino-acid chain: Small ribosomal subunit protein bS1 (558 aa).

6 consecutive S1 motif domains span residues 21–87 (GSII…LSRE), 105–171 (SETV…VSRR), 192–260 (GMHV…LGLK), 277–347 (ETKL…LGLK), 364–434 (GVHV…LGIK), and 451–520 (GAII…LTIH).

Belongs to the bacterial ribosomal protein bS1 family.

In terms of biological role, binds mRNA; thus facilitating recognition of the initiation point. It is needed to translate mRNA with a short Shine-Dalgarno (SD) purine-rich sequence. This Buchnera aphidicola subsp. Acyrthosiphon pisum (strain APS) (Acyrthosiphon pisum symbiotic bacterium) protein is Small ribosomal subunit protein bS1 (rpsA).